The sequence spans 161 residues: Phosphopantetheine adenylyltransferase (161 aa).

Ser-8 serves as a coordination point for substrate. ATP contacts are provided by residues 8–9 and His-16; that span reads SF. Substrate is bound by residues Lys-40, Leu-72, and Arg-86. ATP contacts are provided by residues 87–89, Glu-97, and 122–128; these read GLR and FSFVSSS.

Belongs to the bacterial CoaD family. Homohexamer. The cofactor is Mg(2+).

It is found in the cytoplasm. It carries out the reaction (R)-4'-phosphopantetheine + ATP + H(+) = 3'-dephospho-CoA + diphosphate. It participates in cofactor biosynthesis; coenzyme A biosynthesis; CoA from (R)-pantothenate: step 4/5. In terms of biological role, reversibly transfers an adenylyl group from ATP to 4'-phosphopantetheine, yielding dephospho-CoA (dPCoA) and pyrophosphate. This Thermotoga neapolitana (strain ATCC 49049 / DSM 4359 / NBRC 107923 / NS-E) protein is Phosphopantetheine adenylyltransferase.